The chain runs to 601 residues: Multidrug and toxin extrusion protein 2 (601 aa).

Residues 1-62 (MNTAFAGFDE…PRGFWDEARA (62 aa)) are Cytoplasmic-facing. Residues 63–83 (LFVLSGPLFLFQVLNFLTYVV) form a helical membrane-spanning segment. The Extracellular segment spans residues 84 to 95 (GTVFCGHLGKVE). A helical membrane pass occupies residues 96 to 116 (LASVTLGVAFVNVCGVSVGAG). At 117–145 (LSSACDTLMSQSFGSPNKKHVGVILQRGS) the chain is on the cytoplasmic side. Residues 146-166 (LILLLCCLPCWALFLNTQHIL) traverse the membrane as a helical segment. Over 167–182 (LLFRQDPAVSRLTQDY) the chain is Extracellular. A helical membrane pass occupies residues 183–203 (AMIFIPGLPAIFLYSLLAKYL). Residues 204–212 (QNQGIVWPQ) lie on the Cytoplasmic side of the membrane. The chain crosses the membrane as a helical span at residues 213–233 (VLSGVVGNCVNGVANYALVSV). The Extracellular segment spans residues 234-241 (LNLGVRGS). Residues 242 to 262 (AYANTISQFVQAAFLFLHIVL) traverse the membrane as a helical segment. Topologically, residues 263–281 (KKLHLETWEGWSSQCLRDW) are cytoplasmic. The chain crosses the membrane as a helical span at residues 282 to 301 (GPFLSLAIPSMLMMCVEWWA). Residues 302–320 (YEIGSFLMGLLGVVDLSGQ) are Extracellular-facing. Residues 321–341 (AIIYEVATVVYMIPMGLGMAV) form a helical membrane-spanning segment. Over 342–361 (CVRVGTALGAADTLQAKRSA) the chain is Cytoplasmic. A helical membrane pass occupies residues 362 to 382 (VSGLLCTAGTSLVVGTLLGLL). At 383–402 (NSQLGYIFTSDEEVIALVNQ) the chain is on the extracellular side. The helical transmembrane segment at 403 to 423 (VLPIYIVFQLVEAVCCVFGGV) threads the bilayer. Topologically, residues 424–437 (LRGTGKQAFGAIVN) are cytoplasmic. The helical transmembrane segment at 438–458 (AIMYYIVGLPLGIVLTFVVGM) threads the bilayer. Position 459 (R459) is a topological domain, extracellular. A helical membrane pass occupies residues 460–480 (IMGLWLGMLTCIFLAAVTFVV). Residues 481 to 577 (YAVQLDWKLA…LSVRQLLFRR (97 aa)) are Cytoplasmic-facing. The chain crosses the membrane as a helical span at residues 578-598 (GAALAASVAVLMAGLLVRVLT). The Extracellular portion of the chain corresponds to 599 to 601 (TGY).

The protein belongs to the multi antimicrobial extrusion (MATE) (TC 2.A.66.1) family. As to expression, expressed in renal cortical tissues.

Its subcellular location is the cell membrane. It is found in the apical cell membrane. The catalysed reaction is thiamine(out) + H(+)(in) = thiamine(in) + H(+)(out). It catalyses the reaction estrone 3-sulfate(in) + H(+)(out) = estrone 3-sulfate(out) + H(+)(in). The enzyme catalyses creatinine(in) + H(+)(out) = creatinine(out) + H(+)(in). Multidrug efflux pump that functions as a H(+)/organic cation antiporter. Mediates the efflux of cationic compounds, such as the model cations, tetraethylammonium (TEA) and 1-methyl-4-phenylpyridinium (MPP+), the platinum-based drug oxaliplatin or weak bases that are positively charged at physiological pH, cimetidine or the antidiabetic drug metformin. Mediates the efflux of the endogenous compounds creatinine, thiamine and estrone-3-sulfate. Plays a physiological role in the excretion of drugs, toxins and endogenous metabolites through the kidney. The protein is Multidrug and toxin extrusion protein 2 (SLC47A2) of Oryctolagus cuniculus (Rabbit).